The sequence spans 271 residues: Phosphatidylinositol transfer protein alpha isoform (271 aa).

Positions 59, 61, 86, 90, 97, and 195 each coordinate a 1,2-diacyl-sn-glycero-3-phospho-(1D-myo-inositol). N6-acetyllysine is present on lysine 216. The span at 251-264 (TKRQLDEMRQKDPV) shows a compositional bias: basic and acidic residues. A disordered region spans residues 251–271 (TKRQLDEMRQKDPVKGMTADD).

It belongs to the PtdIns transfer protein family. PI transfer class I subfamily. In terms of processing, phosphorylated by PKC in a calcium and phosphatidylserine-dependent manner. In terms of tissue distribution, expressed in a wide range of tissues.

Its subcellular location is the cytoplasm. It localises to the nucleus. It catalyses the reaction a 1,2-diacyl-sn-glycero-3-phosphocholine(in) = a 1,2-diacyl-sn-glycero-3-phosphocholine(out). The enzyme catalyses a 1,2-diacyl-sn-glycero-3-phospho-(1D-myo-inositol)(in) = a 1,2-diacyl-sn-glycero-3-phospho-(1D-myo-inositol)(out). With respect to regulation, phosphatidylinositol transfer activity is inhibited by N-ethylmaleimide. Functionally, catalyzes the transfer of phosphatidylinositol (PI) and phosphatidylcholine (PC) between membranes. Shows a preference for PI and PC containing shorter saturated or monosaturated acyl chains at the sn-1 and sn-2 positions. Preference order for PC is C16:1 &gt; C16:0 &gt; C18:1 &gt; C18:0 &gt; C20:4 and for PI is C16:1 &gt; C16:0 &gt; C18:1 &gt; C18:0 &gt; C20:4 &gt; C20:3. The chain is Phosphatidylinositol transfer protein alpha isoform (Pitpna) from Rattus norvegicus (Rat).